Consider the following 383-residue polypeptide: Chorismate synthase (383 aa).

The NADP(+) site is built by R39 and R45. Residues 127–129 (RAS), 249–250 (QS), G294, 309–313 (KPIPT), and R335 contribute to the FMN site.

Belongs to the chorismate synthase family. Homotetramer. It depends on FMNH2 as a cofactor.

It carries out the reaction 5-O-(1-carboxyvinyl)-3-phosphoshikimate = chorismate + phosphate. Its pathway is metabolic intermediate biosynthesis; chorismate biosynthesis; chorismate from D-erythrose 4-phosphate and phosphoenolpyruvate: step 7/7. Its function is as follows. Catalyzes the anti-1,4-elimination of the C-3 phosphate and the C-6 proR hydrogen from 5-enolpyruvylshikimate-3-phosphate (EPSP) to yield chorismate, which is the branch point compound that serves as the starting substrate for the three terminal pathways of aromatic amino acid biosynthesis. This reaction introduces a second double bond into the aromatic ring system. The protein is Chorismate synthase of Caldicellulosiruptor bescii (strain ATCC BAA-1888 / DSM 6725 / KCTC 15123 / Z-1320) (Anaerocellum thermophilum).